The primary structure comprises 127 residues: uncharacterized protein (127 aa).

It belongs to the transcriptional regulatory CopG/NikR family.

This is an uncharacterized protein from Methanocaldococcus jannaschii (strain ATCC 43067 / DSM 2661 / JAL-1 / JCM 10045 / NBRC 100440) (Methanococcus jannaschii).